The following is a 199-amino-acid chain: Large ribosomal subunit protein mL51 (199 aa).

The transit peptide at 1-15 directs the protein to the mitochondrion; sequence MNSASISRLTSVIRT.

Belongs to the mitochondrion-specific ribosomal protein mL51 family. As to quaternary structure, component of the mitochondrial ribosome large subunit (39S) which comprises a 16S rRNA and about 50 distinct proteins.

The protein localises to the mitochondrion. This chain is Large ribosomal subunit protein mL51 (mrpl-51), found in Caenorhabditis briggsae.